Here is a 173-residue protein sequence, read N- to C-terminus: MSIDALKNELPEYAKDLKLNLSSLGRETELDDQKKWGTFLASAHAVGEPKTLAAIKAEAETRLSDEALTAAKAASAIMGMNNVYYRFVHLSKNKEYATLPAKLRMNILANPGVDKADFELWSLAVSAINGCGLCIDSHEAELRKHGLTTTQVQAAVRIAATVNAIAAVLAAES.

The active-site Proton donor is the Cys131. Residues Cys131 and Cys134 are joined by a disulfide bond. Residue Cys134 is the Cysteine sulfenic acid (-SOH) intermediate of the active site.

The protein belongs to the AhpD family.

The enzyme catalyses N(6)-[(R)-dihydrolipoyl]-L-lysyl-[lipoyl-carrier protein] + a hydroperoxide = N(6)-[(R)-lipoyl]-L-lysyl-[lipoyl-carrier protein] + an alcohol + H2O. Functionally, antioxidant protein with alkyl hydroperoxidase activity. Required for the reduction of the AhpC active site cysteine residues and for the regeneration of the AhpC enzyme activity. This is Alkyl hydroperoxide reductase AhpD from Maricaulis maris (strain MCS10) (Caulobacter maris).